A 162-amino-acid polypeptide reads, in one-letter code: Cyclic pyranopterin monophosphate synthase (162 aa).

Substrate is bound by residues 75-77 and 113-114; these read LCH and ME. Residue Asp-128 is part of the active site.

This sequence belongs to the MoaC family. As to quaternary structure, homohexamer; trimer of dimers.

It catalyses the reaction (8S)-3',8-cyclo-7,8-dihydroguanosine 5'-triphosphate = cyclic pyranopterin phosphate + diphosphate. The protein operates within cofactor biosynthesis; molybdopterin biosynthesis. In terms of biological role, catalyzes the conversion of (8S)-3',8-cyclo-7,8-dihydroguanosine 5'-triphosphate to cyclic pyranopterin monophosphate (cPMP). The polypeptide is Cyclic pyranopterin monophosphate synthase (Burkholderia ambifaria (strain ATCC BAA-244 / DSM 16087 / CCUG 44356 / LMG 19182 / AMMD) (Burkholderia cepacia (strain AMMD))).